Reading from the N-terminus, the 326-residue chain is 3-isopropylmalate dehydrogenase (326 aa).

Residues Arg81, Arg91, Arg112, and Asp198 each contribute to the substrate site. Residues Asp198, Asp222, and Asp226 each coordinate Mg(2+). 255-267 is a binding site for NAD(+); sequence GAAFDIAGKGIAN.

It belongs to the isocitrate and isopropylmalate dehydrogenases family. In terms of assembly, homotetramer. Mg(2+) is required as a cofactor. The cofactor is Mn(2+).

It is found in the cytoplasm. The enzyme catalyses (2R,3S)-3-isopropylmalate + NAD(+) = 4-methyl-2-oxopentanoate + CO2 + NADH. The protein operates within amino-acid biosynthesis; L-leucine biosynthesis; L-leucine from 3-methyl-2-oxobutanoate: step 3/4. Catalyzes the oxidation of 3-carboxy-2-hydroxy-4-methylpentanoate (3-isopropylmalate) to 3-carboxy-4-methyl-2-oxopentanoate. The product decarboxylates to 4-methyl-2 oxopentanoate. This Archaeoglobus fulgidus (strain ATCC 49558 / DSM 4304 / JCM 9628 / NBRC 100126 / VC-16) protein is 3-isopropylmalate dehydrogenase (leuB).